A 382-amino-acid chain; its full sequence is Acetylserotonin O-methyltransferase (382 aa).

Gly218, Asp241, Asp261, Met262, and Lys275 together coordinate S-adenosyl-L-homocysteine. His279 (proton acceptor) is an active-site residue. Active-site residues include Glu308 and Glu347.

The protein belongs to the class I-like SAM-binding methyltransferase superfamily. Cation-independent O-methyltransferase family.

The protein localises to the cytoplasm. The enzyme catalyses N-acetylserotonin + S-adenosyl-L-methionine = melatonin + S-adenosyl-L-homocysteine + H(+). Its pathway is aromatic compound metabolism; melatonin biosynthesis; melatonin from serotonin: step 1/2. Its function is as follows. Methyltransferase which catalyzes the transfer of a methyl group onto N-acetylserotonin, producing melatonin (N-acetyl-5-methoxytryptamine). Does not seem to possess caffeate O-methyltransferase activity. Implicated in melatonin-dependent circadian dynamics of stomatal aperture to minimize night water loss and promote drought tolerance. Prevents seed germination by promoting melatonin biosynthesis. Promotes melatonin-triggered defense responses to the necrotrophic fungus Botrytis cinerea. In terms of biological role, (Microbial infection) Promotes melatonin-triggered defense responses to the necrotrophic fungus Botrytis cinerea. This chain is Acetylserotonin O-methyltransferase, found in Arabidopsis thaliana (Mouse-ear cress).